The following is a 327-amino-acid chain: Phenylalanine--tRNA ligase alpha subunit (327 aa).

Residue Glu-252 participates in Mg(2+) binding.

The protein belongs to the class-II aminoacyl-tRNA synthetase family. Phe-tRNA synthetase alpha subunit type 1 subfamily. In terms of assembly, tetramer of two alpha and two beta subunits. It depends on Mg(2+) as a cofactor.

It is found in the cytoplasm. It catalyses the reaction tRNA(Phe) + L-phenylalanine + ATP = L-phenylalanyl-tRNA(Phe) + AMP + diphosphate + H(+). This chain is Phenylalanine--tRNA ligase alpha subunit, found in Shewanella woodyi (strain ATCC 51908 / MS32).